The primary structure comprises 1191 residues: MPSEGSQQPSLDSFFKRKNPRVEPYSRTGNNAIIDLTDSPPNKKIKLDDEGSQKNRSMTQTSSSYFKGHPTARPLSVDKRLPRKPSAAIQAYKLQDVIPPQPSHSGLAFETCSLVPQASFVPDSQPEPSASPAPQRTTEQLKRHEEWKTRILAMSGSFRRKRSLALDEAVAAEAREAAGLEDEGTPFDGSDGDDYKSESEKNAEEVGKQLKKYVAKELAGKGKSKGKKKEEIGPSGLAYTPLEKQFMEIKEQNRDVLLLMEVGYKYKFHGEDAKTASRELGIVAFPNRNFFTASIPTHRLHIHVKKLLSLGYKVGVITQTETAALKKIGDNRNAPFARKLTHLFTAATYVEDPSLSSSSSSSSSVRFDDPVVPGTAPPPTNALVAIVEQPVDRASDDRVKVGLVCVVPGTGDITWDEFDDSQIRTELETRLAHLSPAELLLPKQRLTKATEKVLTYFAGEPKHRGRNAVRIERIDNIPEYDAAFDFLTNFYHCKEHKATVSKGDVNDERHLMTEGNKQWSLQPKLSQDGADISLDEEIYLASGVSSSKAILTLVDFPKQVVISMAVAIRYMKRFGLENAFKHTSSFVRFANRSHMLLSSNTLANLEIYQNQTDGGLYGSLIWLLDHCKTRMGKRLLREWVGRPLLDVAALKARADAIEEIMENNSYHMEKLRSLLINMPDLVRGLTRVQYGKATPNELATLLITLVRLASEFKPNMGNVFRSCLLNNIPNTLPTILDTSQRFLNALNLKQARENDVANLWADPDRFPDIQDVKDCISVCEMELNEHLMELRKILKKPTLRYITVSGIEYLVEVPIRDTKIVPAQWMKISATRTVNRYHTPKILAITKERTQHLEKLSIVAREAFIAFQSEVAEYHELVVVSKQIAVIDCLMSLAQTAAASGYCKPKFVAEPELKILAGRHPMVEMLREESYVPFDIHFSKEEGTTKIITGPNMAGKSSTVRAMALIVCMAQIGSFVPAASVTLSVHDSVQTRMGASDEIGRGKSTFMVELSETSDILQTITPRSLVVLDELGRGTSTYDGIAIAYATLSHIAEIGCNTLFVTHYPTVAQDLAREKPDKISNWHMSFDEIQMPDGGAEITFLYQLTRGLQEASFGVWCARLAGLPKPILDTAQMRSSSLKAETQERLRGIVARRVGWMLHNLFDNKTSSSQVLRNVEMLHNSLSSSSISFSQ.

2 stretches are compositionally biased toward polar residues: residues Met-1–Leu-11 and Lys-54–Tyr-65. Disordered regions lie at residues Met-1–Pro-82, Ala-118–Lys-148, and Arg-175–Ala-203. Over residues Pro-122–Gln-135 the composition is skewed to low complexity. 2 stretches are compositionally biased toward basic and acidic residues: residues Glu-139–Lys-148 and Asp-193–Ala-203. Residues Gly-233–Ala-347 form a mispair-binding domain region. ATP is bound at residue Gly-950–Ser-957.

The protein belongs to the DNA mismatch repair MutS family. MSH3 subfamily. As to quaternary structure, heterodimer consisting of MSH2-MSH3 (MutS beta). Forms a ternary complex with MutL alpha (MLH1-PMS1).

The protein resides in the nucleus. Its function is as follows. Component of the post-replicative DNA mismatch repair system (MMR). Heterodimerizes with MSH2 to form MutS beta, which binds to DNA mismatches thereby initiating DNA repair. MSH3 provides substrate-binding and substrate specificity to the complex. When bound, the MutS beta heterodimer bends the DNA helix and shields approximately 20 base pairs. Acts mainly to repair insertion-deletion loops (IDLs) from 2 to 13 nucleotides in size, but can also repair base-base and single insertion-deletion mismatches that occur during replication. After mismatch binding, forms a ternary complex with the MutL alpha heterodimer, which is thought to be responsible for directing the downstream MMR events, including strand discrimination, excision, and resynthesis. ATP binding and hydrolysis play a pivotal role in mismatch repair functions. This chain is DNA mismatch repair protein MSH3 (MSH3), found in Cryptococcus neoformans var. neoformans serotype D (strain B-3501A) (Filobasidiella neoformans).